The sequence spans 451 residues: Adenylosuccinate synthetase isozyme 2 (451 aa).

Residues 34–40 and 62–64 each bind GTP; these read GDEGKGK and GHT. Aspartate 35 (proton acceptor) is an active-site residue. Residues aspartate 35 and glycine 62 each contribute to the Mg(2+) site. Aspartate 35 is a substrate binding site. IMP is bound by residues 35–38, 60–63, threonine 157, arginine 171, asparagine 250, threonine 265, and arginine 329; these read DEGK and NAGH. The Proton donor role is filled by histidine 63. 325–331 contacts substrate; it reads VTTGRKR. GTP-binding positions include arginine 331, 357-359, and 439-442; these read KLD and GVGK.

This sequence belongs to the adenylosuccinate synthetase family. As to quaternary structure, homodimer. Requires Mg(2+) as cofactor.

Its subcellular location is the cytoplasm. The protein resides in the mitochondrion. It catalyses the reaction IMP + L-aspartate + GTP = N(6)-(1,2-dicarboxyethyl)-AMP + GDP + phosphate + 2 H(+). Its pathway is purine metabolism; AMP biosynthesis via de novo pathway; AMP from IMP: step 1/2. With respect to regulation, inhibited competitively by AMP and IMP and non-competitively by fructose 1,6-bisphosphate. In terms of biological role, plays an important role in the de novo pathway and in the salvage pathway of purine nucleotide biosynthesis. Catalyzes the first committed step in the biosynthesis of AMP from IMP. The protein is Adenylosuccinate synthetase isozyme 2 of Gallus gallus (Chicken).